Consider the following 545-residue polypeptide: Chaperonin GroEL 2 (545 aa).

Residues 29–32 (TLGP), 86–90 (DGTTT), glycine 413, 479–481 (NAA), and aspartate 495 contribute to the ATP site.

This sequence belongs to the chaperonin (HSP60) family. Forms a cylinder of 14 subunits composed of two heptameric rings stacked back-to-back. Interacts with the co-chaperonin GroES.

Its subcellular location is the cytoplasm. The enzyme catalyses ATP + H2O + a folded polypeptide = ADP + phosphate + an unfolded polypeptide.. Together with its co-chaperonin GroES, plays an essential role in assisting protein folding. The GroEL-GroES system forms a nano-cage that allows encapsulation of the non-native substrate proteins and provides a physical environment optimized to promote and accelerate protein folding. This Prochlorococcus marinus (strain MIT 9312) protein is Chaperonin GroEL 2.